Reading from the N-terminus, the 811-residue chain is Protein VAC14 homolog (811 aa).

7 HEAT repeats span residues 81 to 119, 122 to 160, 240 to 278, 334 to 372, 375 to 412, 431 to 469, and 472 to 510; these read DSYMESILLPVLYCFNDSDSKIRYYACESMYNIGKVAKG, FRYFNLIFDVLCKLFADTEITVKNGAELLDRLIKDIVMQ, ISYLPFLLDGLMNYLSDPNESIRIVTSNCLYDFLREIQK, QIDYKRILEIIIDHLGSSVPLIQEKALKWLFEFIYIAPK, LLQIPKVLENLLPLMSNDENMRQSAKDLSQNLVILVSK, SVDFRSLIEVLQKLLSNDNEETRLCALEWVLLLQRRTGG, and INMHDPIFQTLLLQLSDPSDLVVSRTLELLAHIAISHKS. Over residues 775 to 785 the composition is skewed to low complexity; it reads TSASGITTTAS. Positions 775 to 811 are disordered; sequence TSASGITTTASNSRDSFITRLPPTAALSTGARKKPKQ.

The protein belongs to the VAC14 family. In terms of assembly, component of the PI(3,5)P2 regulatory complex, composed of ATG18, FIG4, FAB1, VAC14 and VAC7. VAC14 nucleates the assembly of the complex and serves as a scaffold.

It is found in the cytoplasm. Its subcellular location is the vacuole membrane. Its function is as follows. The PI(3,5)P2 regulatory complex regulates both the synthesis and turnover of phosphatidylinositol 3,5-bisphosphate (PtdIns(3,5)P2). Regulates the synthesis of PtdIns(3,5)P2 by positive activation of FAB1 and by controlling FIG4 localization. This Schizosaccharomyces pombe (strain 972 / ATCC 24843) (Fission yeast) protein is Protein VAC14 homolog.